The chain runs to 536 residues: Alpha-1,3-mannosyl-glycoprotein 4-beta-N-acetylglucosaminyltransferase A (536 aa).

The Cytoplasmic segment spans residues 1 to 6 (MRLRNG). A helical; Signal-anchor for type II membrane protein membrane pass occupies residues 7–27 (TVATALVFITTFLSLSWYTAW). Positions 28–54 (QNGKEKLMAYQREFHALKERLRIAEHR) form a coiled coil. The Lumenal segment spans residues 28–536 (QNGKEKLMAY…EIHIKRNPAD (509 aa)). N-linked (GlcNAc...) asparagine glycosylation is found at Asn77 and Asn458.

The protein belongs to the glycosyltransferase 54 family. A divalent metal cation serves as cofactor. In terms of processing, N-glycosylated.

It is found in the golgi apparatus membrane. The protein resides in the secreted. The enzyme catalyses N(4)-{beta-D-GlcNAc-(1-&gt;2)-alpha-D-Man-(1-&gt;3)-[beta-D-GlcNAc-(1-&gt;2)-alpha-D-Man-(1-&gt;6)]-beta-D-Man-(1-&gt;4)-beta-D-GlcNAc-(1-&gt;4)-beta-D-GlcNAc}-L-asparaginyl-[protein] + UDP-N-acetyl-alpha-D-glucosamine = N(4)-{beta-D-GlcNAc-(1-&gt;2)-[beta-D-GlcNAc-(1-&gt;4)]-alpha-D-Man-(1-&gt;3)-[beta-D-GlcNAc-(1-&gt;2)-alpha-D-Man-(1-&gt;6)]-beta-D-Man-(1-&gt;4)-beta-D-GlcNAc-(1-&gt;4)-beta-D-GlcNAc}-L-asparaginyl-[protein] + UDP + H(+). The catalysed reaction is an N(4)-{beta-D-GlcNAc-(1-&gt;2)-alpha-D-Man-(1-&gt;3)-[alpha-D-Man-(1-&gt;6)]-beta-D-Man-(1-&gt;4)-beta-D-GlcNAc-(1-&gt;4)-beta-D-GlcNAc}-L-asparaginyl-[protein] + UDP-N-acetyl-alpha-D-glucosamine = an N(4)-{beta-D-GlcNAc-(1-&gt;2)-[beta-D-GlcNAc-(1-&gt;4)]-alpha-D-Man-(1-&gt;3)-[alpha-D-Man-(1-&gt;6)]-beta-D-Man-(1-&gt;4)-beta-D-GlcNAc-(1-&gt;4)-beta-D-GlcNAc}-L-asparaginyl-[protein] + UDP + H(+). It carries out the reaction an N(4)-{beta-D-GlcNAc-(1-&gt;2)-alpha-D-Man-(1-&gt;3)-[beta-D-GlcNAc-(1-&gt;2)-[beta-D-GlcNAc-(1-&gt;6)]-alpha-D-Man-(1-&gt;6)]-beta-D-Man-(1-&gt;4)-beta-D-GlcNAc-(1-&gt;4)-beta-D-GlcNAc}-L-asparaginyl-[protein] + UDP-N-acetyl-alpha-D-glucosamine = an N(4)-{beta-D-GlcNAc-(1-&gt;2)-[beta-D-GlcNAc-(1-&gt;4)]-alpha-D-Man-(1-&gt;3)-[beta-D-GlcNAc-(1-&gt;2)-[beta-D-GlcNAc-(1-&gt;6)]-alpha-D-Man-(1-&gt;6)]-beta-D-Man-(1-&gt;4)-beta-D-GlcNAc-(1-&gt;4)-beta-D-GlcNAc}-L-asparaginyl-[protein] + UDP + H(+). It catalyses the reaction an N(4)-{beta-D-GlcNAc-(1-&gt;2)-alpha-D-Man-(1-&gt;3)-[beta-D-GlcNAc-(1-&gt;2)-alpha-D-Man-(1-&gt;6)]-beta-D-Man-(1-&gt;4)-beta-D-GlcNAc-(1-&gt;4)-[alpha-L-Fuc-(1-&gt;6)]-beta-D-GlcNAc}-L-asparaginyl-[protein] + UDP-N-acetyl-alpha-D-glucosamine = N(4)-{beta-D-GlcNAc-(1-&gt;2)-[beta-D-GlcNAc-(1-&gt;4)]-alpha-D-Man-(1-&gt;3)-[beta-D-GlcNAc-(1-&gt;2)-alpha-D-Man-(1-&gt;6)]-beta-D-Man-(1-&gt;4)-beta-D-GlcNAc-(1-&gt;4)-[alpha-L-Fuc-(1-&gt;6)]-beta-D-GlcNAc}-asparaginyl-[protein] + UDP + H(+). The enzyme catalyses an N(4)-{beta-D-GlcNAc-(1-&gt;2)-alpha-D-Man-(1-&gt;3)-[beta-D-Gal-(1-&gt;4)-beta-D-GlcNAc-(1-&gt;2)-alpha-D-Man-(1-&gt;6)]-beta-D-Man-(1-&gt;4)-beta-D-GlcNAc-(1-&gt;4)-beta-D-GlcNAc}-L-asparaginyl-[protein] + UDP-N-acetyl-alpha-D-glucosamine = an N(4)-{beta-D-GlcNAc-(1-&gt;2)-[beta-D-GlcNAc-(1-&gt;4)]-alpha-D-Man-(1-&gt;3)-[beta-D-Gal-(1-&gt;4)-beta-D-GlcNAc-(1-&gt;2)-alpha-D-Man-(1-&gt;6)]-beta-D-Man-(1-&gt;4)-beta-D-GlcNAc-(1-&gt;4)-beta-D-GlcNAc}-L-asparaginyl-[protein] + UDP + H(+). The catalysed reaction is N(4)-{beta-D-GlcNAc-(1-&gt;2)-alpha-D-Man-(1-&gt;3)-[alpha-D-Man-(1-&gt;3)-{alpha-D-Man-(1-&gt;6)}-alpha-D-Man-(1-&gt;6)]-beta-D-Man-(1-&gt;4)-beta-D-GlcNAc-(1-&gt;4)-beta-D-GlcNAc}-asparaginyl-[protein] + UDP-N-acetyl-alpha-D-glucosamine = N(4)-{beta-D-GlcNAc-(1-&gt;2)-[beta-D-GlcNAc-(1-&gt;4)]-alpha-D-Man-(1-&gt;3)-[alpha-D-Man-(1-&gt;3)-{alpha-D-Man-(1-&gt;6)}-alpha-D-Man-(1-&gt;6)]-beta-D-Man-(1-&gt;4)-beta-D-GlcNAc-(1-&gt;4)-beta-D-GlcNAc}-asparaginyl-[protein] + UDP + H(+). It carries out the reaction N(4)-{beta-D-GlcNAc-(1-&gt;2)-alpha-D-Man-(1-&gt;3)-beta-D-Man-(1-&gt;4)-beta-D-GlcNAc-(1-&gt;4)-beta-D-GlcNAc}-asparaginyl-[protein] + UDP-N-acetyl-alpha-D-glucosamine = N(4)-{beta-D-GlcNAc-(1-&gt;2)-[beta-D-GlcNAc-(1-&gt;4)]-alpha-D-Man-(1-&gt;3)-beta-D-Man-(1-&gt;4)-beta-D-GlcNAc-(1-&gt;4)-beta-D-GlcNAc}-asparaginyl-[protein] + UDP + H(+). It functions in the pathway protein modification; protein glycosylation. Inhibited by UDP. In terms of biological role, glycosyltransferase that catalyze the transfer of GlcNAc from UDP-GlcNAc to the GlcNAcbeta1-2Manalpha1-3 arm of the core structure of N-linked glycans through a beta1-4 linkage and participates in the production of tri- and tetra-antennary N-linked sugar chains. Involved in glucose transport by mediating SLC2A2/GLUT2 glycosylation, thereby controlling cell-surface expression of SLC2A2 in pancreatic beta cells. The sequence is that of Alpha-1,3-mannosyl-glycoprotein 4-beta-N-acetylglucosaminyltransferase A from Xenopus tropicalis (Western clawed frog).